A 128-amino-acid chain; its full sequence is Fluoride-specific ion channel FluC (128 aa).

4 consecutive transmembrane segments (helical) span residues 5-25, 34-54, 67-87, and 99-119; these read LFIS…GLLF, FGAL…LGLF, FLIT…SEVV, and FCVL…GIWI. Residues Gly74 and Thr77 each contribute to the Na(+) site.

It belongs to the fluoride channel Fluc/FEX (TC 1.A.43) family.

It is found in the cell inner membrane. The enzyme catalyses fluoride(in) = fluoride(out). With respect to regulation, na(+) is not transported, but it plays an essential structural role and its presence is essential for fluoride channel function. Its function is as follows. Fluoride-specific ion channel. Important for reducing fluoride concentration in the cell, thus reducing its toxicity. In Haemophilus influenzae (strain PittEE), this protein is Fluoride-specific ion channel FluC.